Consider the following 274-residue polypeptide: Thiamine kinase (274 aa).

This sequence belongs to the thiamine kinase family.

The enzyme catalyses thiamine + ATP = thiamine phosphate + ADP + H(+). It participates in cofactor biosynthesis; thiamine diphosphate biosynthesis; thiamine phosphate from thiamine: step 1/1. Functionally, catalyzes the ATP-dependent phosphorylation of thiamine to thiamine phosphate. Is involved in thiamine salvage. The sequence is that of Thiamine kinase from Shigella sonnei (strain Ss046).